The primary structure comprises 227 residues: Uracil-DNA glycosylase (227 aa).

Asp-65 acts as the Proton acceptor in catalysis.

Belongs to the uracil-DNA glycosylase (UDG) superfamily. UNG family.

Its subcellular location is the cytoplasm. It catalyses the reaction Hydrolyzes single-stranded DNA or mismatched double-stranded DNA and polynucleotides, releasing free uracil.. In terms of biological role, excises uracil residues from the DNA which can arise as a result of misincorporation of dUMP residues by DNA polymerase or due to deamination of cytosine. In Bacillus velezensis (strain DSM 23117 / BGSC 10A6 / LMG 26770 / FZB42) (Bacillus amyloliquefaciens subsp. plantarum), this protein is Uracil-DNA glycosylase.